The primary structure comprises 386 residues: Synaptotagmin-5 (386 aa).

Over residues 1-16 (MFPEPPTPGSPAPETP) the composition is skewed to pro residues. Residues 1–21 (MFPEPPTPGSPAPETPPDSSR) are disordered. The Vesicular segment spans residues 1–24 (MFPEPPTPGSPAPETPPDSSRIRQ). A helical transmembrane segment spans residues 25–45 (GAVPAWVLATILLGSGLLVFS). Residues 46–386 (SCFCLYRKRC…PDRARPIPAP (341 aa)) lie on the Cytoplasmic side of the membrane. C2 domains follow at residues 108–227 (QLGR…QAWR) and 239–372 (KLGD…AQWH). Ca(2+) contacts are provided by Leu138, Asp139, Asp145, Asp197, Phe198, Asp199, Ser202, Asp205, Asp270, Asp276, Asp330, and Asp332.

It belongs to the synaptotagmin family. As to quaternary structure, homodimer. Interacts with both alpha- and beta-tubulin. The cofactor is Ca(2+). Expressed in kidney, adipose tissue, lung and heart, as well as at higher levels in brain.

The protein localises to the cytoplasmic vesicle. Its subcellular location is the secretory vesicle. It is found in the synaptic vesicle membrane. The protein resides in the recycling endosome membrane. In terms of biological role, may be involved in Ca(2+)-dependent exocytosis of secretory vesicles through Ca(2+) and phospholipid binding to the C2 domain or may serve as Ca(2+) sensors in the process of vesicular trafficking and exocytosis. Regulates the Ca(2+)-dependent secretion of norepinephrine in PC12 cells. Required for export from the endocytic recycling compartment to the cell surface. The polypeptide is Synaptotagmin-5 (Syt5) (Rattus norvegicus (Rat)).